Consider the following 356-residue polypeptide: Glutamine synthetase cytosolic isozyme 1-4 (356 aa).

Position 2 is an N-acetylserine (Ser2). Phosphoserine is present on residues Ser2 and Ser48. Positions 19–99 (IIAEYIWIGG…VMCDAYTPAG (81 aa)) constitute a GS beta-grasp domain. The tract at residues 37–66 (ARTLPGPVTDPSQLPKWNYDGSSTGQAPGD) is disordered. The GS catalytic domain maps to 106 to 356 (KRHAAAKIFE…IAESTILWKP (251 aa)).

The protein belongs to the glutamine synthetase family. As to quaternary structure, homooctamer. Interacts with GRF3. In terms of tissue distribution, expressed in the pericycle in the region of lateral root emergence.

Its subcellular location is the cytoplasm. The catalysed reaction is L-glutamate + NH4(+) + ATP = L-glutamine + ADP + phosphate + H(+). Its function is as follows. High-affinity glutamine synthetase. May contribute to the homeostatic control of glutamine synthesis in roots. The polypeptide is Glutamine synthetase cytosolic isozyme 1-4 (Arabidopsis thaliana (Mouse-ear cress)).